Here is a 500-residue protein sequence, read N- to C-terminus: Aspartyl/glutamyl-tRNA(Asn/Gln) amidotransferase subunit B (500 aa).

This sequence belongs to the GatB/GatE family. GatB subfamily. As to quaternary structure, heterotrimer of A, B and C subunits.

The catalysed reaction is L-glutamyl-tRNA(Gln) + L-glutamine + ATP + H2O = L-glutaminyl-tRNA(Gln) + L-glutamate + ADP + phosphate + H(+). The enzyme catalyses L-aspartyl-tRNA(Asn) + L-glutamine + ATP + H2O = L-asparaginyl-tRNA(Asn) + L-glutamate + ADP + phosphate + 2 H(+). Allows the formation of correctly charged Asn-tRNA(Asn) or Gln-tRNA(Gln) through the transamidation of misacylated Asp-tRNA(Asn) or Glu-tRNA(Gln) in organisms which lack either or both of asparaginyl-tRNA or glutaminyl-tRNA synthetases. The reaction takes place in the presence of glutamine and ATP through an activated phospho-Asp-tRNA(Asn) or phospho-Glu-tRNA(Gln). This is Aspartyl/glutamyl-tRNA(Asn/Gln) amidotransferase subunit B from Rhizobium johnstonii (strain DSM 114642 / LMG 32736 / 3841) (Rhizobium leguminosarum bv. viciae).